The chain runs to 1242 residues: Membrane-associated phosphatidylinositol transfer protein 1 (1242 aa).

3 positions are modified to phosphothreonine: Thr59, Thr282, and Thr287. A disordered region spans residues Cys259 to Leu330. Residues Gly272–Thr282 show a composition bias toward polar residues. Positions Ala299–Ser319 are enriched in low complexity. Ser300, Ser304, Ser319, Ser326, Ser329, Ser342, Ser345, Ser346, and Ser373 each carry phosphoserine. Phosphoserine; by CDK1 is present on Ser382. The span at Ala581–Ser593 shows a compositional bias: low complexity. The tract at residues Ala581 to Pro678 is disordered. Phosphoserine is present on residues Ser593, Ser600, and Ser621. Polar residues predominate over residues Gly643–Ser656. Residues Leu684 to Glu878 form the DDHD domain. At Ser894 the chain carries Phosphoserine. Positions Arg1207 to Glu1242 are disordered. Arg1209 carries the omega-N-methylarginine modification. Ser1235 carries the phosphoserine modification.

Belongs to the PtdIns transfer protein family. PI transfer class IIA subfamily. As to quaternary structure, interacts with PIK4CA and VAPB. Interacts with PTK2B via its C-terminus. Interacts with RHOA. Has higher affinity for the inactive, GDP-bound form of RHOA. The CDK1-phosphorylated form interacts with PLK1. Phosphorylated on multiple sites by CDK1 at the onset of mitosis. Phosphorylation facilitates dissociation from the Golgi complex and is required for interaction with PLK1. In terms of processing, phosphorylated on threonine residues upon treatment with oleic acid. Post-translationally, phosphorylated on tyrosine residues by PTK2B.

It localises to the cytoplasm. The protein localises to the golgi apparatus. The protein resides in the golgi stack membrane. Its subcellular location is the endoplasmic reticulum membrane. It is found in the lipid droplet. It localises to the cleavage furrow. The protein localises to the midbody. The catalysed reaction is a 1,2-diacyl-sn-glycero-3-phospho-(1D-myo-inositol)(in) = a 1,2-diacyl-sn-glycero-3-phospho-(1D-myo-inositol)(out). Catalyzes the transfer of phosphatidylinositol (PI) between membranes. Binds PI, phosphatidylcholine (PC) and phosphatidic acid (PA) with the binding affinity order of PI &gt; PA &gt; PC. Regulates RHOA activity, and plays a role in cytoskeleton remodeling. Necessary for normal completion of cytokinesis. Plays a role in maintaining normal diacylglycerol levels in the Golgi apparatus. Necessary for maintaining the normal structure of the endoplasmic reticulum and the Golgi apparatus. Required for protein export from the endoplasmic reticulum and the Golgi. Binds calcium ions. The polypeptide is Membrane-associated phosphatidylinositol transfer protein 1 (Pitpnm1) (Rattus norvegicus (Rat)).